A 143-amino-acid chain; its full sequence is UPF0179 protein PTO0851 (143 aa).

This sequence belongs to the UPF0179 family.

In Picrophilus torridus (strain ATCC 700027 / DSM 9790 / JCM 10055 / NBRC 100828 / KAW 2/3), this protein is UPF0179 protein PTO0851.